The chain runs to 371 residues: Cytochrome b (371 aa).

4 consecutive transmembrane segments (helical) span residues 25–45 (FGSMLLACLALQVLTGFFLAV), 69–90 (WMMQNLHAIGASMFFICIYIHI), 105–125 (WMSGITLLITLMATAFFGYVL), and 170–190 (FFALHFILPFAIISMSSLHII). Histidine 75 and histidine 89 together coordinate heme b. Heme b-binding residues include histidine 174 and histidine 188. Histidine 193 lines the a ubiquinone pocket. A run of 4 helical transmembrane segments spans residues 218 to 238 (YKDLLFLTLMILFMLIIVSFF), 280 to 300 (LGGALALVMSIMILFIIPFTH), 312 to 332 (LSQLMFWTLVSTFITITWAAT), and 339 to 358 (YIIISQVTATLYFIFFISMP).

This sequence belongs to the cytochrome b family. In terms of assembly, the cytochrome bc1 complex contains 3 respiratory subunits (MT-CYB, CYC1 and UQCRFS1), 2 core proteins (UQCRC1 and UQCRC2) and probably 6 low-molecular weight proteins. Requires heme b as cofactor.

It is found in the mitochondrion inner membrane. Component of the ubiquinol-cytochrome c reductase complex (complex III or cytochrome b-c1 complex) that is part of the mitochondrial respiratory chain. The b-c1 complex mediates electron transfer from ubiquinol to cytochrome c. Contributes to the generation of a proton gradient across the mitochondrial membrane that is then used for ATP synthesis. The sequence is that of Cytochrome b (MT-CYB) from Python molurus (Indian python).